We begin with the raw amino-acid sequence, 56 residues long: Single-pass membrane and coiled-coil domain-containing protein 4 homolog (56 aa).

The tract at residues 1-27 is disordered; sequence MRQLPGKAAKETRKMKRERKQQNKEGH. Residues 9-31 adopt a coiled-coil conformation; that stretch reads AKETRKMKRERKQQNKEGHNRVV. The helical transmembrane segment at 30–50 threads the bilayer; it reads VVTVAIPVCLAVFVMLIVYVY.

Belongs to the SMCO4 family.

The protein resides in the membrane. The polypeptide is Single-pass membrane and coiled-coil domain-containing protein 4 homolog (Nematostella vectensis (Starlet sea anemone)).